The primary structure comprises 282 residues: 2-dehydro-3-deoxyphosphooctonate aldolase (282 aa).

Belongs to the KdsA family.

Its subcellular location is the cytoplasm. It carries out the reaction D-arabinose 5-phosphate + phosphoenolpyruvate + H2O = 3-deoxy-alpha-D-manno-2-octulosonate-8-phosphate + phosphate. Its pathway is carbohydrate biosynthesis; 3-deoxy-D-manno-octulosonate biosynthesis; 3-deoxy-D-manno-octulosonate from D-ribulose 5-phosphate: step 2/3. It functions in the pathway bacterial outer membrane biogenesis; lipopolysaccharide biosynthesis. This Agrobacterium fabrum (strain C58 / ATCC 33970) (Agrobacterium tumefaciens (strain C58)) protein is 2-dehydro-3-deoxyphosphooctonate aldolase.